A 262-amino-acid polypeptide reads, in one-letter code: Hydroxyethylthiazole kinase (262 aa).

Met-50 is a binding site for substrate. Arg-125 and Thr-171 together coordinate ATP. Substrate is bound at residue Gly-198.

It belongs to the Thz kinase family. The cofactor is Mg(2+).

The catalysed reaction is 5-(2-hydroxyethyl)-4-methylthiazole + ATP = 4-methyl-5-(2-phosphooxyethyl)-thiazole + ADP + H(+). It participates in cofactor biosynthesis; thiamine diphosphate biosynthesis; 4-methyl-5-(2-phosphoethyl)-thiazole from 5-(2-hydroxyethyl)-4-methylthiazole: step 1/1. In terms of biological role, catalyzes the phosphorylation of the hydroxyl group of 4-methyl-5-beta-hydroxyethylthiazole (THZ). The chain is Hydroxyethylthiazole kinase from Shigella boydii serotype 18 (strain CDC 3083-94 / BS512).